The primary structure comprises 423 residues: UDP-N-acetylglucosamine 1-carboxyvinyltransferase 1 (423 aa).

23–24 (KN) is a phosphoenolpyruvate binding site. Arg-96 contacts UDP-N-acetyl-alpha-D-glucosamine. The Proton donor role is filled by Cys-120. Residue Cys-120 is modified to 2-(S-cysteinyl)pyruvic acid O-phosphothioketal. Residues 125-129 (RPIDL), Asp-309, and Val-331 each bind UDP-N-acetyl-alpha-D-glucosamine.

Belongs to the EPSP synthase family. MurA subfamily.

The protein localises to the cytoplasm. The enzyme catalyses phosphoenolpyruvate + UDP-N-acetyl-alpha-D-glucosamine = UDP-N-acetyl-3-O-(1-carboxyvinyl)-alpha-D-glucosamine + phosphate. The protein operates within cell wall biogenesis; peptidoglycan biosynthesis. Cell wall formation. Adds enolpyruvyl to UDP-N-acetylglucosamine. The protein is UDP-N-acetylglucosamine 1-carboxyvinyltransferase 1 of Streptococcus thermophilus (strain CNRZ 1066).